We begin with the raw amino-acid sequence, 159 residues long: Nutritionally-regulated adipose and cardiac-enriched protein homolog (159 aa).

Residues 1–67 (MKTAVHALSP…GDEPRRTTRH (67 aa)) are disordered. Composition is skewed to basic and acidic residues over residues 12–25 (SRPETQHQTRKNEE) and 50–63 (SPQERCGRGDEPRR). A helical membrane pass occupies residues 107–124 (LTACILLALALGMCCGQA).

The protein resides in the cell membrane. The protein is Nutritionally-regulated adipose and cardiac-enriched protein homolog (NRAC) of Bos taurus (Bovine).